Here is a 222-residue protein sequence, read N- to C-terminus: RING finger protein 141 (222 aa).

Residues 147 to 184 (CCICMDGKADLILPCAHSFCQKCIDKWSGQSRNCPVCR) form an RING-type zinc finger.

The sequence is that of RING finger protein 141 (rnf141) from Danio rerio (Zebrafish).